Here is a 468-residue protein sequence, read N- to C-terminus: Probable citrate synthase, mitochondrial (468 aa).

Residues His-303, His-349, and Asp-404 contribute to the active site.

The protein belongs to the citrate synthase family. In terms of assembly, homodimer.

It is found in the mitochondrion matrix. The catalysed reaction is oxaloacetate + acetyl-CoA + H2O = citrate + CoA + H(+). It functions in the pathway carbohydrate metabolism; tricarboxylic acid cycle; isocitrate from oxaloacetate: step 1/2. The polypeptide is Probable citrate synthase, mitochondrial (cts-1) (Caenorhabditis elegans).